The primary structure comprises 421 residues: AA11 family lytic polysaccharide monooxygenase (421 aa).

The first 19 residues, 1–19 (MFSKAFLSAALLGAAAVEG), serve as a signal peptide directing secretion. His-20, His-79, and Glu-93 together coordinate Cu(+). Cystine bridges form between Cys-48/Cys-162, Cys-84/Cys-110, and Cys-201/Cys-235. A glycan (N-linked (GlcNAc...) asparagine) is linked at Asn-117. A disordered region spans residues 231–349 (GSQACTGTPT…SSSSSSSGAL (119 aa)). Residues 247–285 (TAGSSGSSGSSSGSSSGGSSSSAAGSGATAPPAPAVSST) are compositionally biased toward low complexity. A compositionally biased stretch (polar residues) spans 304-314 (SPAQPTHTSAP). Over residues 315–349 (SGGSSSGSGSSSGSNSGSSSGSSSSSSSSSSSGAL) the composition is skewed to low complexity.

Belongs to the polysaccharide monooxygenase AA11 family. Requires Cu(2+) as cofactor.

In terms of biological role, lytic polysaccharide monooxygenase (LPMO) that depolymerizes chitin via the oxidation of scissile beta-(1-4)-glycosidic bonds, yielding C1 or C4 oxidation products. Catalysis by LPMOs requires the reduction of the active-site copper from Cu(II) to Cu(I) by a reducing agent and H(2)O(2) or O(2) as a cosubstrate. Active on chitin but has no activity on other substrates, including diverse mannans, cellulose and starch (data not shown). Primary chain cleavage yields predominantly aldonic acid oligosaccharides with even-numbered degrees of polymerization. This Aspergillus oryzae (strain ATCC 42149 / RIB 40) (Yellow koji mold) protein is AA11 family lytic polysaccharide monooxygenase.